The following is a 263-amino-acid chain: 3-deoxy-manno-octulosonate cytidylyltransferase (263 aa).

This sequence belongs to the KdsB family.

It localises to the cytoplasm. The catalysed reaction is 3-deoxy-alpha-D-manno-oct-2-ulosonate + CTP = CMP-3-deoxy-beta-D-manno-octulosonate + diphosphate. The protein operates within nucleotide-sugar biosynthesis; CMP-3-deoxy-D-manno-octulosonate biosynthesis; CMP-3-deoxy-D-manno-octulosonate from 3-deoxy-D-manno-octulosonate and CTP: step 1/1. It participates in bacterial outer membrane biogenesis; lipopolysaccharide biosynthesis. Activates KDO (a required 8-carbon sugar) for incorporation into bacterial lipopolysaccharide in Gram-negative bacteria. The polypeptide is 3-deoxy-manno-octulosonate cytidylyltransferase (Burkholderia vietnamiensis (strain G4 / LMG 22486) (Burkholderia cepacia (strain R1808))).